The chain runs to 387 residues: MQFIPSPAMVFDGSLNLDPLVSGKPPEETTVVVAMSGGVDSSVVAALLHERGYKVIGATMQLHSSSPASGAKSCCGSVDIYDAKRVASTLGFPHYVLDYEEVFRREVIDDFINSYKRGETPIPCVKCNQTVKFRDMLKAARAIGGDVVATGHYVRRVEIAGEQQILRGKDPQKDQSYFLFSVTSEQLKFLRFPLGDLAKSNVRLLAQQLNLEVADKPDSQDICFVPENSYREVLRNLDPASVKKGKIVHVDGRLLGEHDGISNFTVGQRRGLNISAPYPLYVVRLDAAQNTVVVGPQSALMKRALFVKNLNWLPDYNIPKRGLAVDARLRSSGATVRATITSDGDGYGTVVLEEDCVVSPGQACVLYDKERLLGGGWIYNKLCHEGA.

Residues 34–41 (AMSGGVDS) and Met60 each bind ATP. Cys127 functions as the Nucleophile in the catalytic mechanism. Cys127 and Cys223 form a disulfide bridge. An ATP-binding site is contributed by Gly151. Residues 173 to 175 (KDQ) are interaction with tRNA. Residue Cys223 is the Cysteine persulfide intermediate of the active site.

The protein belongs to the MnmA/TRMU family.

It localises to the cytoplasm. It carries out the reaction S-sulfanyl-L-cysteinyl-[protein] + uridine(34) in tRNA + AH2 + ATP = 2-thiouridine(34) in tRNA + L-cysteinyl-[protein] + A + AMP + diphosphate + H(+). Catalyzes the 2-thiolation of uridine at the wobble position (U34) of tRNA, leading to the formation of s(2)U34. This is tRNA-specific 2-thiouridylase MnmA from Anaplasma marginale (strain St. Maries).